Consider the following 410-residue polypeptide: Arginine deiminase (410 aa).

Residue C398 is the Amidino-cysteine intermediate of the active site.

Belongs to the arginine deiminase family. Homodimer.

The protein resides in the cytoplasm. It carries out the reaction L-arginine + H2O = L-citrulline + NH4(+). Its pathway is amino-acid degradation; L-arginine degradation via ADI pathway; carbamoyl phosphate from L-arginine: step 1/2. This chain is Arginine deiminase (arcA), found in Mycoplasmopsis arginini (Mycoplasma arginini).